A 122-amino-acid polypeptide reads, in one-letter code: Large ribosomal subunit protein uL14 (122 aa).

It belongs to the universal ribosomal protein uL14 family. Part of the 50S ribosomal subunit. Forms a cluster with proteins L3 and L19. In the 70S ribosome, L14 and L19 interact and together make contacts with the 16S rRNA in bridges B5 and B8.

In terms of biological role, binds to 23S rRNA. Forms part of two intersubunit bridges in the 70S ribosome. This Polynucleobacter asymbioticus (strain DSM 18221 / CIP 109841 / QLW-P1DMWA-1) (Polynucleobacter necessarius subsp. asymbioticus) protein is Large ribosomal subunit protein uL14.